A 155-amino-acid polypeptide reads, in one-letter code: Large ribosomal subunit protein bL17 (155 aa).

Belongs to the bacterial ribosomal protein bL17 family. In terms of assembly, part of the 50S ribosomal subunit. Contacts protein L32.

The chain is Large ribosomal subunit protein bL17 from Syntrophotalea carbinolica (strain DSM 2380 / NBRC 103641 / GraBd1) (Pelobacter carbinolicus).